A 303-amino-acid chain; its full sequence is Phosphatidylglycerol--prolipoprotein diacylglyceryl transferase (303 aa).

A run of 4 helical transmembrane segments spans residues leucine 18 to leucine 38, leucine 58 to glutamate 78, isoleucine 106 to phenylalanine 126, and glutamate 133 to glycine 153. Residue arginine 154 coordinates a 1,2-diacyl-sn-glycero-3-phospho-(1'-sn-glycerol). Helical transmembrane passes span proline 193–phenylalanine 213, leucine 223–isoleucine 243, and isoleucine 266–tyrosine 286.

Belongs to the Lgt family.

The protein localises to the cell inner membrane. It catalyses the reaction L-cysteinyl-[prolipoprotein] + a 1,2-diacyl-sn-glycero-3-phospho-(1'-sn-glycerol) = an S-1,2-diacyl-sn-glyceryl-L-cysteinyl-[prolipoprotein] + sn-glycerol 1-phosphate + H(+). Its pathway is protein modification; lipoprotein biosynthesis (diacylglyceryl transfer). Functionally, catalyzes the transfer of the diacylglyceryl group from phosphatidylglycerol to the sulfhydryl group of the N-terminal cysteine of a prolipoprotein, the first step in the formation of mature lipoproteins. The polypeptide is Phosphatidylglycerol--prolipoprotein diacylglyceryl transferase (Prochlorococcus marinus (strain NATL1A)).